The chain runs to 64 residues: Large ribosomal subunit protein bL35 (64 aa).

The segment covering 1-10 has biased composition (polar residues); it reads MPKMKTNSAA. Residues 1 to 64 form a disordered region; sequence MPKMKTNSAA…AKKLHQLLQK (64 aa). Basic residues predominate over residues 54–64; sequence QAKKLHQLLQK.

The protein belongs to the bacterial ribosomal protein bL35 family.

The sequence is that of Large ribosomal subunit protein bL35 from Bifidobacterium longum (strain NCC 2705).